The primary structure comprises 283 residues: uncharacterized protein (283 aa).

Helical transmembrane passes span 28–48, 65–85, 113–133, 135–155, 200–220, and 246–266; these read LSST…ILLI, LTSL…GFIL, LKRG…FMIV, ILFI…IVFI, LNYI…NFVV, and IVDV…AVFA.

To M.jannaschii MJ0233.

Its subcellular location is the cell membrane. This is an uncharacterized protein from Methanocaldococcus jannaschii (strain ATCC 43067 / DSM 2661 / JAL-1 / JCM 10045 / NBRC 100440) (Methanococcus jannaschii).